A 426-amino-acid chain; its full sequence is Glutamyl-tRNA reductase (426 aa).

Substrate is bound by residues 49–52 (TCNR), Ser-101, 106–108 (EPQ), and Gln-112. The active-site Nucleophile is Cys-50. Residue 181 to 186 (GAGETI) coordinates NADP(+). The disordered stretch occupies residues 405–426 (RLFPEKPGYQHPPHSYPDREDR).

Belongs to the glutamyl-tRNA reductase family. Homodimer.

The enzyme catalyses (S)-4-amino-5-oxopentanoate + tRNA(Glu) + NADP(+) = L-glutamyl-tRNA(Glu) + NADPH + H(+). It participates in porphyrin-containing compound metabolism; protoporphyrin-IX biosynthesis; 5-aminolevulinate from L-glutamyl-tRNA(Glu): step 1/2. Functionally, catalyzes the NADPH-dependent reduction of glutamyl-tRNA(Glu) to glutamate 1-semialdehyde (GSA). This Xanthomonas axonopodis pv. citri (strain 306) protein is Glutamyl-tRNA reductase.